The chain runs to 93 residues: Putative pterin-4-alpha-carbinolamine dehydratase (93 aa).

This sequence belongs to the pterin-4-alpha-carbinolamine dehydratase family.

It catalyses the reaction (4aS,6R)-4a-hydroxy-L-erythro-5,6,7,8-tetrahydrobiopterin = (6R)-L-erythro-6,7-dihydrobiopterin + H2O. In Sulfurisphaera tokodaii (strain DSM 16993 / JCM 10545 / NBRC 100140 / 7) (Sulfolobus tokodaii), this protein is Putative pterin-4-alpha-carbinolamine dehydratase.